Reading from the N-terminus, the 1670-residue chain is Protein TASOR (1670 aa).

Residues Met1–Lys110 are disordered. Ala2 carries the post-translational modification N-acetylalanine. The span at Gln67–Ser78 shows a compositional bias: polar residues. Phosphoserine is present on Ser344. Lys586 participates in a covalent cross-link: Glycyl lysine isopeptide (Lys-Gly) (interchain with G-Cter in SUMO2). Ser633, Ser636, Ser673, and Ser800 each carry phosphoserine. Glycyl lysine isopeptide (Lys-Gly) (interchain with G-Cter in SUMO2) cross-links involve residues Lys823 and Lys832. At Ser843 the chain carries Phosphoserine. Residue Lys872 forms a Glycyl lysine isopeptide (Lys-Gly) (interchain with G-Cter in SUMO2) linkage. A disordered region spans residues Thr921 to Glu947. Ser927, Ser971, and Ser979 each carry phosphoserine. Over residues Ser927 to Lys938 the composition is skewed to basic and acidic residues. Phosphothreonine occurs at positions 982 and 1049. A Phosphoserine modification is found at Ser1103. Basic and acidic residues predominate over residues Glu1532 to Thr1545. Disordered regions lie at residues Glu1532 to Ser1558 and Phe1638 to Lys1670. Composition is skewed to polar residues over residues Gln1546–Ser1558 and Lys1659–Lys1670. A Phosphoserine modification is found at Ser1552.

The protein belongs to the TASOR family. As to quaternary structure, component of the HUSH complex; at least composed of TASOR, PPHLN1 and MPHOSPH8. Interacts with MORC2; the interaction associateS MORC2 with the HUSH complex which recruits MORC2 to heterochromatic loci. Interacts with ZNF638; leading to recruitment of the HUSH complex to unintegrated retroviral DNA. Interacts with INPP5A, EML1, SV1L, GPSM2, ITGB3BP, CNTN1, ETFA, PSMD8, S100A10, MPHOSPH8, TMEM100, ALB, PARPBP, HCFC2, NCBP1 and SETDB1.

Its subcellular location is the nucleus. It is found in the chromosome. Functionally, component of the HUSH complex, a multiprotein complex that mediates epigenetic repression. The HUSH complex is recruited to genomic loci rich in H3K9me3 and is required to maintain transcriptional silencing by promoting recruitment of SETDB1, a histone methyltransferase that mediates further deposition of H3K9me3, as well as MORC2. Also represses L1 retrotransposons in collaboration with MORC2 and, probably, SETDB1, the silencing is dependent of repressive epigenetic modifications, such as H3K9me3 mark. Silencing events often occur within introns of transcriptionally active genes, and lead to the down-regulation of host gene expression. The HUSH complex is also involved in the silencing of unintegrated retroviral DNA by being recruited by ZNF638: some part of the retroviral DNA formed immediately after infection remains unintegrated in the host genome and is transcriptionally repressed. Plays a crucial role in early embryonic development. Involved in the organization of spindle poles and spindle apparatus assembly during zygotic division. Plays an important role in maintaining epiblast fitness or potency. This chain is Protein TASOR, found in Homo sapiens (Human).